Here is a 67-residue protein sequence, read N- to C-terminus: Theromin (67 aa).

Residues 2 to 27 (CENTECPRACPGEYEFDEDGCNTCVC) enclose the Antistasin-like domain.

Homodimer. Post-translationally, eight disulfide bonds are present.

It is found in the secreted. In terms of biological role, potent thrombin-specific inhibitor. The chain is Theromin from Theromyzon tessulatum (Duck leech).